Here is a 650-residue protein sequence, read N- to C-terminus: Rab proteins geranylgeranyltransferase component A 1 (650 aa).

Disordered stretches follow at residues 156–208 (IPAE…ETPK) and 603–650 (PAPP…EPSE). The span at 177–190 (ATGKKENSDAKSST) shows a compositional bias: basic and acidic residues. The span at 616–634 (DSSQQEVPESSVTPETNSE) shows a compositional bias: polar residues.

The protein belongs to the Rab GDI family. As to quaternary structure, monomer. Heterotrimer composed of RABGGTA, RABGGTB and CHM; within this trimer, RABGGTA and RABGGTB form the catalytic component B, while CHM (component A) mediates Rab protein binding. Can associate with the Rab GGTase dimer (RGGT or component B) prior to Rab protein binding; the association is stabilized by geranylgeranyl pyrophosphate (GGpp). The CHM:RGGT:Rab complex is destabilized by GGpp. Interacts with RAB1A, RAB1B, RAB7A and RAB27A and mediates their prenylation. Interacts with RAB5A. Interacts with the non-phosphorylated forms of RAB3A, RAB3B, RAB3C, RAB3D, RAB5B, RAB5C RAB8A, RAB8B, RAB10, RAB12, RAB35, and RAB43. In terms of tissue distribution, most abundant in the heart, brain, and spleen. Lower levels seen in the lung, liver, muscle and kidney. Extremely low levels seen in the testis.

The protein localises to the cytoplasm. Its subcellular location is the cytosol. In terms of biological role, substrate-binding subunit of the Rab geranylgeranyltransferase (GGTase) complex. Binds unprenylated Rab proteins and presents the substrate peptide to the catalytic component B composed of RABGGTA and RABGGTB, and remains bound to it after the geranylgeranyl transfer reaction. The component A is thought to be regenerated by transferring its prenylated Rab back to the donor membrane. Besides, a pre-formed complex consisting of CHM and the Rab GGTase dimer (RGGT or component B) can bind to and prenylate Rab proteins; this alternative pathway is proposed to be the predominant pathway for Rab protein geranylgeranylation. In Rattus norvegicus (Rat), this protein is Rab proteins geranylgeranyltransferase component A 1 (Chm).